The primary structure comprises 135 residues: UPF0329 protein ECU07_1860/ECU10_0040/ECU11_2100 (135 aa).

This sequence belongs to the UPF0329 family.

This chain is UPF0329 protein ECU07_1860/ECU10_0040/ECU11_2100, found in Encephalitozoon cuniculi (strain GB-M1) (Microsporidian parasite).